Here is a 293-residue protein sequence, read N- to C-terminus: MQVFADIAVLREQIKQIKREGRRVAFVPTMGNLHEGHLTLVRKARELADVVVVSIFVNPMQFDRAEDLKNYPRTLEEDLSKLNGEGVDLVLTPTPETMYPQGLDKQTFVEVPGLSYMLEGASRPGHFRGVATIVTKLFNIVQPDVACFGEKDFQQLAVIRQMVEDLCMDIEIVGVATVRELDGLAMSSRNNLLTLDERQRAPVLARTMRWISSAIRGGRDDYPSIIEDAVDQLRAADLEPDEIFIRDARTLLPISSESKQAVILMSAFLGKVRLIDNQVLDLQTDTKASSEEE.

Residue 30-37 (MGNLHEGH) coordinates ATP. His37 (proton donor) is an active-site residue. Gln61 contacts (R)-pantoate. Gln61 provides a ligand contact to beta-alanine. Residue 149 to 152 (GEKD) participates in ATP binding. Gln155 provides a ligand contact to (R)-pantoate. Residues Val178 and 186–189 (MSSR) each bind ATP.

The protein belongs to the pantothenate synthetase family. Homodimer.

The protein resides in the cytoplasm. The catalysed reaction is (R)-pantoate + beta-alanine + ATP = (R)-pantothenate + AMP + diphosphate + H(+). Its pathway is cofactor biosynthesis; (R)-pantothenate biosynthesis; (R)-pantothenate from (R)-pantoate and beta-alanine: step 1/1. In terms of biological role, catalyzes the condensation of pantoate with beta-alanine in an ATP-dependent reaction via a pantoyl-adenylate intermediate. This Vibrio cholerae serotype O1 (strain ATCC 39541 / Classical Ogawa 395 / O395) protein is Pantothenate synthetase.